The sequence spans 262 residues: Flap endonuclease Xni (262 aa).

Aspartate 105 is a Mg(2+) binding site. Positions glutamate 162–isoleucine 259 constitute a 5'-3' exonuclease domain. K(+) is bound by residues leucine 172, alanine 173, proline 181, isoleucine 183, and isoleucine 186. An interaction with DNA region spans residues glycine 185 to serine 190.

This sequence belongs to the Xni family. Requires Mg(2+) as cofactor. K(+) serves as cofactor.

Has flap endonuclease activity. During DNA replication, flap endonucleases cleave the 5'-overhanging flap structure that is generated by displacement synthesis when DNA polymerase encounters the 5'-end of a downstream Okazaki fragment. In Shewanella baltica (strain OS185), this protein is Flap endonuclease Xni.